We begin with the raw amino-acid sequence, 1755 residues long: Transposon Ty1-ER1 Gag-Pol polyprotein (1755 aa).

3 stretches are compositionally biased toward polar residues: residues 1–23 (MESQ…SVTS), 48–60 (TKAN…TPAS), and 127–152 (QSQF…GNTF). 3 disordered regions span residues 1-93 (MESQ…MMTQ), 126-174 (PQSQ…PPPM), and 352-421 (GSRN…SKST). Low complexity predominate over residues 153 to 165 (TDSSSADSDMTST). An RNA-binding region spans residues 299-401 (NNGIHINNKV…NSKSKTARAH (103 aa)). Residues 402–418 (NVSTSNNSPSTDNDSIS) show a composition bias toward low complexity. S416 bears the Phosphoserine mark. D461 (for protease activity; shared with dimeric partner) is an active-site residue. An integrase-type zinc finger-like region spans residues 583–640 (NVHTSESTRKYPYPFIHRMLAHANAQTIRYSLKNNTITYFNESDVDWSSAIDYQCPDC). An Integrase catalytic domain is found at 660-835 (NSYEPFQYLH…AGLDISTLLP (176 aa)). Positions 671 and 736 each coordinate Mg(2+). Disordered regions lie at residues 956–1087 (SKAV…ETEK), 1092–1111 (RSPS…NIVP), and 1130–1171 (DLPL…DSNA). Residues 960–969 (SPTDSTPPST) show a composition bias toward low complexity. The segment covering 1005–1015 (STPQISNIEST) has biased composition (polar residues). Positions 1038-1053 (ESSHASKSKDFRHSDS) are enriched in basic and acidic residues. Composition is skewed to polar residues over residues 1054–1082 (YSEN…QISD) and 1101–1111 (PENNSSHNIVP). A Bipartite nuclear localization signal motif is present at residues 1178–1212 (KKRSLEDNETEIKVSRDTWNTKNMRSLEPPRSKKR). In terms of domain architecture, Reverse transcriptase Ty1/copia-type spans 1338–1476 (NNYYITQLDI…DILGLEIKYQ (139 aa)). Mg(2+)-binding residues include D1346, D1427, D1428, D1610, E1652, and D1685. The RNase H Ty1/copia-type domain maps to 1610 to 1752 (DASYGNQPYY…IKTFKLLTNK (143 aa)).

The capsid protein forms a homotrimer, from which the VLPs are assembled. The protease is a homodimer, whose active site consists of two apposed aspartic acid residues. Initially, virus-like particles (VLPs) are composed of the structural unprocessed proteins Gag and Gag-Pol, and also contain the host initiator methionine tRNA (tRNA(i)-Met) which serves as a primer for minus-strand DNA synthesis, and a dimer of genomic Ty RNA. Processing of the polyproteins occurs within the particle and proceeds by an ordered pathway, called maturation. First, the protease (PR) is released by autocatalytic cleavage of the Gag-Pol polyprotein yielding capsid protein p45 and a Pol-p154 precursor protein. This cleavage is a prerequisite for subsequent processing of Pol-p154 at the remaining sites to release the mature structural and catalytic proteins. Maturation takes place prior to the RT reaction and is required to produce transposition-competent VLPs.

The protein resides in the cytoplasm. The protein localises to the nucleus. It carries out the reaction DNA(n) + a 2'-deoxyribonucleoside 5'-triphosphate = DNA(n+1) + diphosphate. The enzyme catalyses Endonucleolytic cleavage to 5'-phosphomonoester.. In terms of biological role, capsid protein (CA) is the structural component of the virus-like particle (VLP), forming the shell that encapsulates the retrotransposons dimeric RNA genome. The particles are assembled from trimer-clustered units and there are holes in the capsid shells that allow for the diffusion of macromolecules. CA also has nucleocapsid-like chaperone activity, promoting primer tRNA(i)-Met annealing to the multipartite primer-binding site (PBS), dimerization of Ty1 RNA and initiation of reverse transcription. Functionally, the aspartyl protease (PR) mediates the proteolytic cleavages of the Gag and Gag-Pol polyproteins after assembly of the VLP. Reverse transcriptase/ribonuclease H (RT) is a multifunctional enzyme that catalyzes the conversion of the retro-elements RNA genome into dsDNA within the VLP. The enzyme displays a DNA polymerase activity that can copy either DNA or RNA templates, and a ribonuclease H (RNase H) activity that cleaves the RNA strand of RNA-DNA heteroduplexes during plus-strand synthesis and hydrolyzes RNA primers. The conversion leads to a linear dsDNA copy of the retrotransposon that includes long terminal repeats (LTRs) at both ends. Its function is as follows. Integrase (IN) targets the VLP to the nucleus, where a subparticle preintegration complex (PIC) containing at least integrase and the newly synthesized dsDNA copy of the retrotransposon must transit the nuclear membrane. Once in the nucleus, integrase performs the integration of the dsDNA into the host genome. This Saccharomyces cerevisiae (strain ATCC 204508 / S288c) (Baker's yeast) protein is Transposon Ty1-ER1 Gag-Pol polyprotein (TY1B-ER1).